The chain runs to 1312 residues: Cyclic GMP-binding protein D (1312 aa).

The N-terminal Ras-GEF domain maps to 26–155 (GFSAIKSCSL…EFFKAKKMAR (130 aa)). Composition is skewed to low complexity over residues 206–236 (NTMN…SSPN) and 275–296 (NGTS…LFNQ). Disordered regions lie at residues 206-244 (NTMN…RSSM) and 260-326 (NFNN…NNVN). The segment covering 297–310 (QPSLSMLNDDGSVQ) has biased composition (polar residues). Positions 311–326 (NNNNNNNNNNNNNNVN) are enriched in low complexity. The region spanning 353–582 (LPEAIAKELT…FRLSKIREET (230 aa)) is the Ras-GEF domain. Residues 586-658 (QSLKESNGIG…NCGNGSGISS (73 aa)) form a disordered region. Positions 591-612 (SNGIGNSNSTSGGSSSSLVNKD) are enriched in low complexity. The segment covering 613–625 (GSGGGGGSGGGGS) has biased composition (gly residues). Positions 630–644 (GDGKGDGKDNRDGRG) are enriched in basic and acidic residues. Over residues 646–657 (GNSNCGNGSGIS) the composition is skewed to low complexity. 698-857 (VSSTLSEREW…ATFYKFIGVI (160 aa)) contributes to the a nucleoside 3',5'-cyclic phosphate binding site. The 67-residue stretch at 940–1006 (SSFRTKFGLS…DKILTVDKNI (67 aa)) folds into the GRAM domain. The segment covering 1059 to 1087 (QQQQPSQQPSQQQSQSSQLQQSVSASSTT) has biased composition (low complexity). 2 disordered regions span residues 1059-1108 (QQQQ…IKDL) and 1167-1210 (NNIN…NSSI). A nucleoside 3',5'-cyclic phosphate is bound by residues 1105-1218 (IKDL…SNTS) and 1182-1303 (NNNN…LACV).

Functionally, promotes the exchange of Ras-bound GDP by GTP. Induces the formation of substrate-attached pseudopodia, that leads to increased adhesion and thereby negatively influencing cell speed and polarity. The protein is Cyclic GMP-binding protein D (gbpD) of Dictyostelium discoideum (Social amoeba).